A 47-amino-acid polypeptide reads, in one-letter code: Conotoxin reg3.11 (47 aa).

Positions 1-31 (DQPVERHAENKRHLIPAVMRAMTMNADRRVQ) are excised as a propeptide. 3 disulfide bridges follow: cysteine 32–cysteine 44, cysteine 33–cysteine 42, and cysteine 38–cysteine 45. Residues 46-47 (YH) constitute a propeptide that is removed on maturation.

It belongs to the conotoxin M superfamily. In terms of tissue distribution, expressed by the venom duct.

The protein resides in the secreted. This Conus regius (Crown cone) protein is Conotoxin reg3.11.